Here is a 164-residue protein sequence, read N- to C-terminus: UPF0304 protein YPDSF_1971 (164 aa).

This sequence belongs to the UPF0304 family.

This Yersinia pestis (strain Pestoides F) protein is UPF0304 protein YPDSF_1971.